A 273-amino-acid polypeptide reads, in one-letter code: Homeobox protein Nkx-2.2 (273 aa).

Disordered stretches follow at residues 1–56 (MSLT…LDAV) and 91–131 (AASA…KRKR). Acidic residues predominate over residues 20 to 38 (DTNDEEGSVAEGPEEESEG). A DNA-binding region (homeobox) is located at residues 128–187 (KRKRRVLFSKAQTYELERRFRQQRYLSAPEREHLASLIRLTPTQVKIWFQNHRYKMKRAR).

It belongs to the NK-2 homeobox family. In terms of assembly, interacts with OLIG2.

The protein resides in the nucleus. Transcriptional activator involved in the development of insulin-producting beta cells in the endocrine pancreas. May also be involved in specifying diencephalic neuromeric boundaries, and in controlling the expression of genes that play a role in axonal guidance. Binds to elements within the NEUROD1 promoter. The protein is Homeobox protein Nkx-2.2 (NKX2-2) of Mesocricetus auratus (Golden hamster).